We begin with the raw amino-acid sequence, 344 residues long: tRNA N6-adenosine threonylcarbamoyltransferase (344 aa).

His110 and His114 together coordinate Fe cation. Residues 133–137 (VVSGA), Asp166, Gly179, and Asn278 each bind substrate. Asp303 provides a ligand contact to Fe cation.

This sequence belongs to the KAE1 / TsaD family. The cofactor is Fe(2+).

The protein localises to the cytoplasm. It catalyses the reaction L-threonylcarbamoyladenylate + adenosine(37) in tRNA = N(6)-L-threonylcarbamoyladenosine(37) in tRNA + AMP + H(+). Its function is as follows. Required for the formation of a threonylcarbamoyl group on adenosine at position 37 (t(6)A37) in tRNAs that read codons beginning with adenine. Is involved in the transfer of the threonylcarbamoyl moiety of threonylcarbamoyl-AMP (TC-AMP) to the N6 group of A37, together with TsaE and TsaB. TsaD likely plays a direct catalytic role in this reaction. This chain is tRNA N6-adenosine threonylcarbamoyltransferase, found in Chlamydia abortus (strain DSM 27085 / S26/3) (Chlamydophila abortus).